The following is a 372-amino-acid chain: 4-hydroxy-3-methylbut-2-en-1-yl diphosphate synthase (flavodoxin) (372 aa).

[4Fe-4S] cluster contacts are provided by Cys270, Cys273, Cys305, and Glu312.

This sequence belongs to the IspG family. The cofactor is [4Fe-4S] cluster.

The enzyme catalyses (2E)-4-hydroxy-3-methylbut-2-enyl diphosphate + oxidized [flavodoxin] + H2O + 2 H(+) = 2-C-methyl-D-erythritol 2,4-cyclic diphosphate + reduced [flavodoxin]. Its pathway is isoprenoid biosynthesis; isopentenyl diphosphate biosynthesis via DXP pathway; isopentenyl diphosphate from 1-deoxy-D-xylulose 5-phosphate: step 5/6. Its function is as follows. Converts 2C-methyl-D-erythritol 2,4-cyclodiphosphate (ME-2,4cPP) into 1-hydroxy-2-methyl-2-(E)-butenyl 4-diphosphate. The protein is 4-hydroxy-3-methylbut-2-en-1-yl diphosphate synthase (flavodoxin) of Salmonella gallinarum (strain 287/91 / NCTC 13346).